The primary structure comprises 510 residues: Proline--tRNA ligase 2 (510 aa).

It belongs to the class-II aminoacyl-tRNA synthetase family. ProS type 3 subfamily. Homodimer.

The protein localises to the cytoplasm. The enzyme catalyses tRNA(Pro) + L-proline + ATP = L-prolyl-tRNA(Pro) + AMP + diphosphate. Functionally, catalyzes the attachment of proline to tRNA(Pro) in a two-step reaction: proline is first activated by ATP to form Pro-AMP and then transferred to the acceptor end of tRNA(Pro). In Anaeromyxobacter dehalogenans (strain 2CP-C), this protein is Proline--tRNA ligase 2.